Reading from the N-terminus, the 219-residue chain is Occludin/ELL domain-containing protein 1 (219 aa).

A disordered region spans residues 1–110 (MQIHAGPASR…DYELKYPPVT (110 aa)). Over residues 17–43 (LARLSGPEATCNSRPAARGRQRAAAPR) the composition is skewed to low complexity. Over residues 72-93 (VFADELRPREPLHPEKHPRDLG) the composition is skewed to basic and acidic residues. Residues 100-210 (PDYELKYPPV…QIRKFDDQQD (111 aa)) enclose the OCEL domain.

It belongs to the ELL/occludin family.

This Mus musculus (Mouse) protein is Occludin/ELL domain-containing protein 1 (Ocel1).